A 192-amino-acid chain; its full sequence is Glycerol-3-phosphate acyltransferase (192 aa).

Transmembrane regions (helical) follow at residues 4–24 (MFWL…AILL), 54–74 (LAIL…LIAS), 80–100 (IAQQ…PVYF), 112–132 (AGVL…AWLL), and 154–174 (LLAW…LLIV).

Belongs to the PlsY family. Probably interacts with PlsX.

It localises to the cell inner membrane. It carries out the reaction an acyl phosphate + sn-glycerol 3-phosphate = a 1-acyl-sn-glycero-3-phosphate + phosphate. The protein operates within lipid metabolism; phospholipid metabolism. Its function is as follows. Catalyzes the transfer of an acyl group from acyl-phosphate (acyl-PO(4)) to glycerol-3-phosphate (G3P) to form lysophosphatidic acid (LPA). This enzyme utilizes acyl-phosphate as fatty acyl donor, but not acyl-CoA or acyl-ACP. The sequence is that of Glycerol-3-phosphate acyltransferase from Pseudomonas savastanoi pv. phaseolicola (strain 1448A / Race 6) (Pseudomonas syringae pv. phaseolicola (strain 1448A / Race 6)).